The following is a 144-amino-acid chain: Urease subunit beta (144 aa).

The segment covering 110–119 (HAAPAAPAIP) has biased composition (low complexity). Residues 110 to 144 (HAAPAAPAIPARHESAAGDAPSPLKERAGFDNETR) form a disordered region. Residues 133–144 (LKERAGFDNETR) show a composition bias toward basic and acidic residues.

This sequence belongs to the urease beta subunit family. Heterotrimer of UreA (gamma), UreB (beta) and UreC (alpha) subunits. Three heterotrimers associate to form the active enzyme.

The protein localises to the cytoplasm. The enzyme catalyses urea + 2 H2O + H(+) = hydrogencarbonate + 2 NH4(+). It functions in the pathway nitrogen metabolism; urea degradation; CO(2) and NH(3) from urea (urease route): step 1/1. The protein is Urease subunit beta of Micrococcus luteus (strain ATCC 4698 / DSM 20030 / JCM 1464 / CCM 169 / CCUG 5858 / IAM 1056 / NBRC 3333 / NCIMB 9278 / NCTC 2665 / VKM Ac-2230) (Micrococcus lysodeikticus).